A 254-amino-acid polypeptide reads, in one-letter code: Type III pantothenate kinase (254 aa).

An ATP-binding site is contributed by 6–13 (DVGNTNIV). Residues Phe100 and 107–110 (GADR) each bind substrate. Catalysis depends on Asp109, which acts as the Proton acceptor. Asp129 serves as a coordination point for K(+). Residue Thr132 coordinates ATP. Thr184 contributes to the substrate binding site.

It belongs to the type III pantothenate kinase family. As to quaternary structure, homodimer. NH4(+) serves as cofactor. The cofactor is K(+).

Its subcellular location is the cytoplasm. The catalysed reaction is (R)-pantothenate + ATP = (R)-4'-phosphopantothenate + ADP + H(+). Its pathway is cofactor biosynthesis; coenzyme A biosynthesis; CoA from (R)-pantothenate: step 1/5. Its function is as follows. Catalyzes the phosphorylation of pantothenate (Pan), the first step in CoA biosynthesis. In Moorella thermoacetica (strain ATCC 39073 / JCM 9320), this protein is Type III pantothenate kinase.